The primary structure comprises 516 residues: Na(+)/H(+) antiporter NhaB (516 aa).

The next 12 membrane-spanning stretches (helical) occupy residues 23 to 43, 61 to 80, 97 to 117, 120 to 140, 144 to 164, 202 to 222, 238 to 258, 303 to 323, 348 to 368, 391 to 411, 447 to 467, and 475 to 495; these read LALI…PFVA, CYPL…IGMT, LLLI…LFVF, LLLG…AAAF, FLDA…FYGI, LMMH…VGEP, FFIR…LTCL, AVIG…VGLI, TEAL…AVII, LFYL…VGTV, ATPN…APLI, and VWMA…CVEF.

The protein belongs to the NhaB Na(+)/H(+) (TC 2.A.34) antiporter family.

It is found in the cell inner membrane. The enzyme catalyses 2 Na(+)(in) + 3 H(+)(out) = 2 Na(+)(out) + 3 H(+)(in). Its function is as follows. Na(+)/H(+) antiporter that extrudes sodium in exchange for external protons. The protein is Na(+)/H(+) antiporter NhaB of Klebsiella pneumoniae (strain 342).